Consider the following 368-residue polypeptide: Histidinol-phosphate aminotransferase (368 aa).

N6-(pyridoxal phosphate)lysine is present on lysine 215.

The protein belongs to the class-II pyridoxal-phosphate-dependent aminotransferase family. Histidinol-phosphate aminotransferase subfamily. Homodimer. Requires pyridoxal 5'-phosphate as cofactor.

The catalysed reaction is L-histidinol phosphate + 2-oxoglutarate = 3-(imidazol-4-yl)-2-oxopropyl phosphate + L-glutamate. Its pathway is amino-acid biosynthesis; L-histidine biosynthesis; L-histidine from 5-phospho-alpha-D-ribose 1-diphosphate: step 7/9. The protein is Histidinol-phosphate aminotransferase (hisC) of Buchnera aphidicola subsp. Acyrthosiphon pisum (strain APS) (Acyrthosiphon pisum symbiotic bacterium).